Consider the following 118-residue polypeptide: MESRWGIVVIGLLCCVSWVEAITSSPKIQVYTRSPAENGKHNHLNCYVSSFHPPQITIRLLRNGEEMPNVERSDLSFSNDWTFHRLVHTGFVPNDKDVFECEVTHNSVTKSVKWDRDN.

Residues methionine 1–alanine 21 form the signal peptide. Residues proline 26–lysine 113 form the Ig-like C1-type domain. A disulfide bridge links cysteine 46 with cysteine 101.

It belongs to the beta-2-microglobulin family. As to quaternary structure, heterodimer of an alpha chain and a beta chain. Beta-2-microglobulin is the beta-chain of major histocompatibility complex class I molecules.

It localises to the secreted. Its function is as follows. Component of the class I major histocompatibility complex (MHC). Involved in the presentation of peptide antigens to the immune system. The polypeptide is Beta-2-microglobulin (B2M) (Tachyglossus aculeatus aculeatus (Southeast Australian short-beaked echidna)).